The chain runs to 276 residues: Malonyl-[acyl-carrier protein] O-methyltransferase (276 aa).

Belongs to the methyltransferase superfamily.

It carries out the reaction malonyl-[ACP] + S-adenosyl-L-methionine = malonyl-[ACP] methyl ester + S-adenosyl-L-homocysteine. Its pathway is cofactor biosynthesis; biotin biosynthesis. Functionally, converts the free carboxyl group of a malonyl-thioester to its methyl ester by transfer of a methyl group from S-adenosyl-L-methionine (SAM). It allows to synthesize pimeloyl-ACP via the fatty acid synthetic pathway. This chain is Malonyl-[acyl-carrier protein] O-methyltransferase, found in Paenibacillus sp. (strain JDR-2).